The primary structure comprises 156 residues: SsrA-binding protein (156 aa).

Belongs to the SmpB family.

It is found in the cytoplasm. Functionally, required for rescue of stalled ribosomes mediated by trans-translation. Binds to transfer-messenger RNA (tmRNA), required for stable association of tmRNA with ribosomes. tmRNA and SmpB together mimic tRNA shape, replacing the anticodon stem-loop with SmpB. tmRNA is encoded by the ssrA gene; the 2 termini fold to resemble tRNA(Ala) and it encodes a 'tag peptide', a short internal open reading frame. During trans-translation Ala-aminoacylated tmRNA acts like a tRNA, entering the A-site of stalled ribosomes, displacing the stalled mRNA. The ribosome then switches to translate the ORF on the tmRNA; the nascent peptide is terminated with the 'tag peptide' encoded by the tmRNA and targeted for degradation. The ribosome is freed to recommence translation, which seems to be the essential function of trans-translation. The sequence is that of SsrA-binding protein from Lactiplantibacillus plantarum (strain ATCC BAA-793 / NCIMB 8826 / WCFS1) (Lactobacillus plantarum).